A 163-amino-acid chain; its full sequence is Cytochrome c-type biogenesis protein CcmE (163 aa).

Over 1–8 the chain is Cytoplasmic; the sequence is MNPRRKKR. Residues 9-29 form a helical; Signal-anchor for type II membrane protein membrane-spanning segment; it reads LTLAVALIVGVAGAASLLLYA. Over 30-163 the chain is Periplasmic; that stretch reads LNSNLNLFYT…QEGVEKTAQY (134 aa). Residues histidine 131 and tyrosine 135 each coordinate heme.

The protein belongs to the CcmE/CycJ family.

It localises to the cell inner membrane. Functionally, heme chaperone required for the biogenesis of c-type cytochromes. Transiently binds heme delivered by CcmC and transfers the heme to apo-cytochromes in a process facilitated by CcmF and CcmH. This is Cytochrome c-type biogenesis protein CcmE from Shewanella denitrificans (strain OS217 / ATCC BAA-1090 / DSM 15013).